Here is a 200-residue protein sequence, read N- to C-terminus: Glycerol-3-phosphate acyltransferase (200 aa).

5 consecutive transmembrane segments (helical) span residues 4 to 24, 53 to 73, 80 to 100, 115 to 135, and 138 to 158; these read FALCYMFAAYLLGSISSAVIV, WAALAVFVFDVLKGMIPVWCG, QFELGMVALGACLGHIFPIFF, IAPIGWGVMATMLGTWVLVFV, and GYSSLSAVISALLVPLYVWWF.

Belongs to the PlsY family. In terms of assembly, probably interacts with PlsX.

It is found in the cell inner membrane. It catalyses the reaction an acyl phosphate + sn-glycerol 3-phosphate = a 1-acyl-sn-glycero-3-phosphate + phosphate. Its pathway is lipid metabolism; phospholipid metabolism. Catalyzes the transfer of an acyl group from acyl-phosphate (acyl-PO(4)) to glycerol-3-phosphate (G3P) to form lysophosphatidic acid (LPA). This enzyme utilizes acyl-phosphate as fatty acyl donor, but not acyl-CoA or acyl-ACP. The chain is Glycerol-3-phosphate acyltransferase from Actinobacillus succinogenes (strain ATCC 55618 / DSM 22257 / CCUG 43843 / 130Z).